The following is a 102-amino-acid chain: Large ribosomal subunit protein bL21 (102 aa).

This sequence belongs to the bacterial ribosomal protein bL21 family. In terms of assembly, part of the 50S ribosomal subunit. Contacts protein L20.

Functionally, this protein binds to 23S rRNA in the presence of protein L20. The polypeptide is Large ribosomal subunit protein bL21 (Sulfurimonas denitrificans (strain ATCC 33889 / DSM 1251) (Thiomicrospira denitrificans (strain ATCC 33889 / DSM 1251))).